A 422-amino-acid chain; its full sequence is Structural polyprotein (422 aa).

The Extracellular segment spans residues 1-359 (SVTEHFNVYK…WPHEIIQYYY (359 aa)). Residues asparagine 200 and asparagine 262 are each glycosylated (N-linked (GlcNAc...) asparagine; by host). Residues 360–382 (GLYPAATIAAVSGXSLMALLTLA) traverse the membrane as a helical segment. Residues 383–422 (ATCCMLATARRKCLTPYALTPGAVVPLTLGLXXCAPRANA) lie on the Cytoplasmic side of the membrane. Residues cysteine 385, cysteine 395, and cysteine 416 are each lipidated (S-palmitoyl cysteine; by host). A transient transmembrane before p62-6K protein processing region spans residues 395 to 415 (CLTPYALTPGAVVPLTLGLXX).

Spike glycoprotein E2: Processing of the precursor of protein E3/E2 into E2 and E3 results in a heterodimer of the spike glycoproteins E2 and E1. Spike glycoprotein E2: Spike at virion surface are constituted of three E2-E1 heterodimers. Spike glycoprotein E2: Interacts with 6K protein. Structural polyprotein: Specific enzymatic cleavages in vivo yield mature proteins. Capsid protein is auto-cleaved during polyprotein translation, unmasking a signal peptide at the N-terminus of the precursor of E3/E2. The remaining polyprotein is then targeted to the host endoplasmic reticulum, where host signal peptidase cleaves it into pE2, 6K and E1 proteins. pE2 is further processed to mature E3 and E2 by host furin in trans-Golgi vesicle. Post-translationally, spike glycoprotein E2: Palmitoylated via thioester bonds. These palmitoylations may induce disruption of the C-terminus transmembrane. This would result in the reorientation of E2 C-terminus from lumenal to cytoplasmic side. In terms of processing, spike glycoprotein E2: N-glycosylated.

The protein localises to the virion membrane. It localises to the host cell membrane. In terms of biological role, spike glycoprotein E2: Plays a role in viral attachment to target host cell, by binding to the cell receptor. Synthesized as a p62 precursor which is processed by furin at the cell membrane just before virion budding, giving rise to E2-E1 heterodimer. The p62-E1 heterodimer is stable, whereas E2-E1 is unstable and dissociate at low pH. p62 is processed at the last step, presumably to avoid E1 fusion activation before its final export to cell surface. E2 C-terminus contains a transitory transmembrane that would be disrupted by palmitoylation, resulting in reorientation of the C-terminal tail from lumenal to cytoplasmic side. This step is critical since E2 C-terminus is involved in budding by interacting with capsid proteins. This release of E2 C-terminus in cytoplasm occurs lately in protein export, and precludes premature assembly of particles at the endoplasmic reticulum membrane. The sequence is that of Structural polyprotein from Ross river virus (strain 213970) (RRV).